The sequence spans 443 residues: Methyl-coenzyme M reductase II subunit beta (443 aa).

Y367 is a binding site for coenzyme M. Position 369 (G369) interacts with coenzyme B.

It belongs to the methyl-coenzyme M reductase beta subunit family. As to quaternary structure, MCR is a hexamer of two alpha, two beta, and two gamma chains, forming a dimer of heterotrimers. Coenzyme F430 is required as a cofactor.

It catalyses the reaction coenzyme B + methyl-coenzyme M = methane + coenzyme M-coenzyme B heterodisulfide. Its pathway is one-carbon metabolism; methyl-coenzyme M reduction; methane from methyl-coenzyme M: step 1/1. In terms of biological role, component of the methyl-coenzyme M reductase (MCR) I that catalyzes the reductive cleavage of methyl-coenzyme M (CoM-S-CH3 or 2-(methylthio)ethanesulfonate) using coenzyme B (CoB or 7-mercaptoheptanoylthreonine phosphate) as reductant which results in the production of methane and the mixed heterodisulfide of CoB and CoM (CoM-S-S-CoB). This is the final step in methanogenesis. This chain is Methyl-coenzyme M reductase II subunit beta (mrtB), found in Methanothermus fervidus (strain ATCC 43054 / DSM 2088 / JCM 10308 / V24 S).